The primary structure comprises 141 residues: Lutropin subunit beta (141 aa).

A signal peptide spans 1 to 22; that stretch reads MERYQELTVLLLLLLLEGGSWG. Intrachain disulfides connect Cys-30–Cys-78, Cys-44–Cys-93, Cys-47–Cys-131, Cys-55–Cys-109, Cys-59–Cys-111, and Cys-114–Cys-121. Asn-34 is a glycosylation site (N-linked (GlcNAc...) asparagine).

It belongs to the glycoprotein hormones subunit beta family. In terms of assembly, heterodimer of a common alpha chain and a unique beta chain which confers biological specificity to thyrotropin, lutropin, follitropin and gonadotropin.

The protein localises to the secreted. In terms of biological role, promotes spermatogenesis and ovulation by stimulating the testes and ovaries to synthesize steroids. The chain is Lutropin subunit beta (LHB) from Trichosurus vulpecula (Brush-tailed possum).